A 440-amino-acid chain; its full sequence is 5-hydroxytryptamine receptor 6 (440 aa).

Topologically, residues 1-27 are extracellular; the sequence is MVPEPGPVNSSTPAWGPGPPPAPGGSG. A glycan (N-linked (GlcNAc...) asparagine) is linked at Asn-9. The chain crosses the membrane as a helical span at residues 28–52; the sequence is WVAAALCVVIVLTAAANSLLIALIC. Over 53–62 the chain is Cytoplasmic; it reads TQPALRNTSN. The chain crosses the membrane as a helical span at residues 63 to 88; the sequence is FFLVSLFTSDLMVGLVVMPPAMLNAL. At 89–96 the chain is on the extracellular side; it reads YGRWVLAR. The helical transmembrane segment at 97–122 threads the bilayer; the sequence is GLCLLWTAFDVMCCSASILNLCLISL. Cys-99 and Cys-180 are oxidised to a cystine. Asp-106 provides a ligand contact to serotonin. Residues 123 to 142 are Cytoplasmic-facing; sequence DRYLLILSPLRYKLRMTAPR. The chain crosses the membrane as a helical span at residues 143-167; sequence ALALILGAWSLAALASFLPLLLGWH. Topologically, residues 168–185 are extracellular; that stretch reads ELGKARTSAPGQCRLLAS. Residues 186 to 209 traverse the membrane as a helical segment; it reads LPYVLVASGVTFFLPSGAICFTYC. Residues 210-268 are Cytoplasmic-facing; that stretch reads RILLAARKQAVQVASLTTGTATAGQALETLQVPRTPRPGMESADSRRLTTKHSRKALKA. Residues 269 to 295 form a helical membrane-spanning segment; the sequence is SLTLGILLSMFFVTWLPFFVASIAQAV. Residues 296–301 are Extracellular-facing; sequence CDCISP. A helical membrane pass occupies residues 302–325; sequence GLFDVLTWLGYCNSTMNPIIYPLF. The Cytoplasmic portion of the chain corresponds to 326–440; that stretch reads MRDFKRALGR…RQHPLGSPMN (115 aa).

The protein belongs to the G-protein coupled receptor 1 family. As to quaternary structure, interacts with CDK5. Interacts with MTOR. Interacts with RPTOR and NF1.

The protein localises to the cell membrane. Its function is as follows. G-protein coupled receptor for 5-hydroxytryptamine (serotonin), a biogenic hormone that functions as a neurotransmitter, a hormone and a mitogen. Also has a high affinity for tricyclic psychotropic drugs. Ligand binding causes a conformation change that triggers signaling via guanine nucleotide-binding proteins (G proteins) and modulates the activity of downstream effectors. HTR6 is coupled to G(s) G alpha proteins and mediates activation of adenylate cyclase activity. Controls pyramidal neurons migration during corticogenesis, through the regulation of CDK5 activity. Is an activator of mTOR signaling. This Mus musculus (Mouse) protein is 5-hydroxytryptamine receptor 6.